The following is a 352-amino-acid chain: Glycerol-1-phosphate dehydrogenase [NAD(P)+] (352 aa).

NAD(+)-binding positions include 98–102 and 120–123; these read GKAID and TAAS. Aspartate 125 lines the substrate pocket. NAD(+) is bound at residue serine 129. Substrate is bound at residue aspartate 172. Zn(2+)-binding residues include aspartate 172 and histidine 252. Histidine 256 serves as a coordination point for substrate. Histidine 268 provides a ligand contact to Zn(2+).

The protein belongs to the glycerol-1-phosphate dehydrogenase family. Zn(2+) is required as a cofactor.

It is found in the cytoplasm. It carries out the reaction sn-glycerol 1-phosphate + NAD(+) = dihydroxyacetone phosphate + NADH + H(+). The catalysed reaction is sn-glycerol 1-phosphate + NADP(+) = dihydroxyacetone phosphate + NADPH + H(+). The protein operates within membrane lipid metabolism; glycerophospholipid metabolism. In terms of biological role, catalyzes the NAD(P)H-dependent reduction of dihydroxyacetonephosphate (DHAP or glycerone phosphate) to glycerol 1-phosphate (G1P). The G1P thus generated is used as the glycerophosphate backbone of phospholipids in the cellular membranes of Archaea. This is Glycerol-1-phosphate dehydrogenase [NAD(P)+] from Halobacterium salinarum (strain ATCC 29341 / DSM 671 / R1).